The primary structure comprises 262 residues: Dehydrin COR410 (262 aa).

Disordered stretches follow at residues 1–153 and 187–262; these read MEDE…HDTD and LPGG…KPSA. 2 stretches are compositionally biased toward basic and acidic residues: residues 34–45 and 53–74; these read KKAEEDKEKEEE and VSVEEPEVKKEEHEDGEKKETL. Positions 89 to 101 are enriched in acidic residues; the sequence is SDEEEEEVIDDNG. 2 tandem repeats follow at residues 106 to 126 and 173 to 193. The tract at residues 106 to 245 is 3 X 21 AA repeats, Lys-rich; that stretch reads RKKKKGLKEK…MDKLPGYHKT (140 aa). Basic and acidic residues-rich tracts occupy residues 113-130 and 187-196; these read KEKLQGKLPGHKDTEGEH and LPGGHKKPED. A compositionally biased stretch (low complexity) spans 197–209; that stretch reads AAAVPVTHAAPAP. Repeat 3 spans residues 225-245; the sequence is AKEKKGLLGKIMDKLPGYHKT. Residues 244-262 show a composition bias toward basic and acidic residues; the sequence is KTGEEDKAAAATGEHKPSA.

In terms of tissue distribution, expressed in roots, crown and leaves during cold acclimation.

The chain is Dehydrin COR410 (COR410) from Triticum aestivum (Wheat).